The primary structure comprises 659 residues: Exoribonuclease 2 (659 aa).

The region spanning 189–532 (RRDLTALHFV…NHRLIKACLA (344 aa)) is the RNB domain. The S1 motif domain maps to 577–659 (NPEFRAEVQD…ETRSLIGNLV (83 aa)).

It belongs to the RNR ribonuclease family. RNase II subfamily.

It is found in the cytoplasm. The catalysed reaction is Exonucleolytic cleavage in the 3'- to 5'-direction to yield nucleoside 5'-phosphates.. Its function is as follows. Involved in mRNA degradation. Hydrolyzes single-stranded polyribonucleotides processively in the 3' to 5' direction. The sequence is that of Exoribonuclease 2 from Mannheimia succiniciproducens (strain KCTC 0769BP / MBEL55E).